We begin with the raw amino-acid sequence, 258 residues long: uncharacterized protein (258 aa).

A signal peptide spans 1-20 (MKCFQKLYIFILILIVLMAG). A lipid anchor (N-palmitoyl cysteine) is attached at cysteine 21. Cysteine 21 is lipidated: S-diacylglycerol cysteine.

This sequence belongs to the staphylococcal tandem lipoprotein family.

Its subcellular location is the cell membrane. This is an uncharacterized protein from Staphylococcus aureus (strain COL).